The primary structure comprises 714 residues: Fumarate reductase flavoprotein subunit (714 aa).

FAD contacts are provided by residues 13–16 (GGLA), 42–44 (SHS), and 49–50 (GG). Residue histidine 43 is modified to Tele-8alpha-FAD histidine. Catalysis depends on residues histidine 257 and arginine 273. Residues glutamate 420 and 436 to 437 (SV) contribute to the FAD site.

This sequence belongs to the FAD-dependent oxidoreductase 2 family. FRD/SDH subfamily. In terms of assembly, part of an enzyme complex containing three subunits: a flavoprotein (frdA), an iron-sulfur protein (frdB), and diheme cytochrome b (frdC). It depends on FAD as a cofactor.

The protein localises to the cell inner membrane. It catalyses the reaction a quinone + succinate = fumarate + a quinol. Functionally, the fumarate reductase enzyme complex is required for fumarate respiration. The chain is Fumarate reductase flavoprotein subunit (frdA) from Helicobacter pylori (strain ATCC 700392 / 26695) (Campylobacter pylori).